We begin with the raw amino-acid sequence, 158 residues long: ATP synthase subunit b' (158 aa).

Residues 24 to 44 (ATLPLMAVQILVLVFLLNAVF) form a helical membrane-spanning segment.

This sequence belongs to the ATPase B chain family. As to quaternary structure, F-type ATPases have 2 components, F(1) - the catalytic core - and F(0) - the membrane proton channel. F(1) has five subunits: alpha(3), beta(3), gamma(1), delta(1), epsilon(1). F(0) has four main subunits: a(1), b(1), b'(1) and c(10-14). The alpha and beta chains form an alternating ring which encloses part of the gamma chain. F(1) is attached to F(0) by a central stalk formed by the gamma and epsilon chains, while a peripheral stalk is formed by the delta, b and b' chains.

The protein localises to the cellular thylakoid membrane. Functionally, f(1)F(0) ATP synthase produces ATP from ADP in the presence of a proton or sodium gradient. F-type ATPases consist of two structural domains, F(1) containing the extramembraneous catalytic core and F(0) containing the membrane proton channel, linked together by a central stalk and a peripheral stalk. During catalysis, ATP synthesis in the catalytic domain of F(1) is coupled via a rotary mechanism of the central stalk subunits to proton translocation. Its function is as follows. Component of the F(0) channel, it forms part of the peripheral stalk, linking F(1) to F(0). The b'-subunit is a diverged and duplicated form of b found in plants and photosynthetic bacteria. The sequence is that of ATP synthase subunit b' from Synechococcus elongatus (strain ATCC 33912 / PCC 7942 / FACHB-805) (Anacystis nidulans R2).